Here is a 511-residue protein sequence, read N- to C-terminus: Maturase K (511 aa).

It belongs to the intron maturase 2 family. MatK subfamily.

It is found in the plastid. It localises to the chloroplast. Functionally, usually encoded in the trnK tRNA gene intron. Probably assists in splicing its own and other chloroplast group II introns. This chain is Maturase K, found in Mandragora officinarum (Mandrake).